The following is a 243-amino-acid chain: 1-(5-phosphoribosyl)-5-[(5-phosphoribosylamino)methylideneamino] imidazole-4-carboxamide isomerase (243 aa).

Catalysis depends on aspartate 8, which acts as the Proton acceptor. Aspartate 130 acts as the Proton donor in catalysis.

Belongs to the HisA/HisF family.

It is found in the cytoplasm. The enzyme catalyses 1-(5-phospho-beta-D-ribosyl)-5-[(5-phospho-beta-D-ribosylamino)methylideneamino]imidazole-4-carboxamide = 5-[(5-phospho-1-deoxy-D-ribulos-1-ylimino)methylamino]-1-(5-phospho-beta-D-ribosyl)imidazole-4-carboxamide. The protein operates within amino-acid biosynthesis; L-histidine biosynthesis; L-histidine from 5-phospho-alpha-D-ribose 1-diphosphate: step 4/9. The chain is 1-(5-phosphoribosyl)-5-[(5-phosphoribosylamino)methylideneamino] imidazole-4-carboxamide isomerase from Acinetobacter baumannii (strain AB307-0294).